A 146-amino-acid polypeptide reads, in one-letter code: Hemoglobin subunit beta (146 aa).

At Val1 the chain carries N-acetylvaline. Positions 2 to 146 constitute a Globin domain; that stretch reads HLTGEEKSAV…VANALAHKYH (145 aa). Thr12 is subject to Phosphothreonine. Phosphoserine is present on Ser44. Lys59 bears the N6-acetyllysine mark. His63 serves as a coordination point for heme b. Lys82 is modified (N6-acetyllysine). His92 serves as a coordination point for heme b. Cys93 carries the S-nitrosocysteine modification. At Lys144 the chain carries N6-acetyllysine.

This sequence belongs to the globin family. In terms of assembly, heterotetramer of two alpha chains and two beta chains. Red blood cells.

In terms of biological role, involved in oxygen transport from the lung to the various peripheral tissues. This is Hemoglobin subunit beta (HBB) from Nycticebus coucang (Slow loris).